Consider the following 109-residue polypeptide: T cell receptor alpha variable 27 (109 aa).

An N-terminal signal peptide occupies residues methionine 1–threonine 19. The Ig-like domain maps to glutamine 20–glycine 109. N-linked (GlcNAc...) asparagine glycans are attached at residues asparagine 36 and asparagine 42. Residues cysteine 41 and cysteine 107 are joined by a disulfide bond.

Alpha-beta TR is a heterodimer composed of an alpha and beta chain; disulfide-linked. The alpha-beta TR is associated with the transmembrane signaling CD3 coreceptor proteins to form the TR-CD3 (TcR or TCR). The assembly of alpha-beta TR heterodimers with CD3 occurs in the endoplasmic reticulum where a single alpha-beta TR heterodimer associates with one CD3D-CD3E heterodimer, one CD3G-CD3E heterodimer and one CD247 homodimer forming a stable octameric structure. CD3D-CD3E and CD3G-CD3E heterodimers preferentially associate with TR alpha and TR beta chains, respectively. The association of the CD247 homodimer is the last step of TcR assembly in the endoplasmic reticulum and is required for transport to the cell surface. As to quaternary structure, (Microbial infection) Interacts with Staphylococcus aureus enterotoxin H/entH.

It localises to the cell membrane. Its function is as follows. V region of the variable domain of T cell receptor (TR) alpha chain that participates in the antigen recognition. Alpha-beta T cell receptors are antigen specific receptors which are essential to the immune response and are present on the cell surface of T lymphocytes. Recognize peptide-major histocompatibility (MH) (pMH) complexes that are displayed by antigen presenting cells (APC), a prerequisite for efficient T cell adaptive immunity against pathogens. Binding of alpha-beta TR to pMH complex initiates TR-CD3 clustering on the cell surface and intracellular activation of LCK that phosphorylates the ITAM motifs of CD3G, CD3D, CD3E and CD247 enabling the recruitment of ZAP70. In turn, ZAP70 phosphorylates LAT, which recruits numerous signaling molecules to form the LAT signalosome. The LAT signalosome propagates signal branching to three major signaling pathways, the calcium, the mitogen-activated protein kinase (MAPK) kinase and the nuclear factor NF-kappa-B (NF-kB) pathways, leading to the mobilization of transcription factors that are critical for gene expression and essential for T cell growth and differentiation. The T cell repertoire is generated in the thymus, by V-(D)-J rearrangement. This repertoire is then shaped by intrathymic selection events to generate a peripheral T cell pool of self-MH restricted, non-autoaggressive T cells. Post-thymic interaction of alpha-beta TR with the pMH complexes shapes TR structural and functional avidity. The protein is T cell receptor alpha variable 27 of Homo sapiens (Human).